We begin with the raw amino-acid sequence, 452 residues long: Argininosuccinate lyase (452 aa).

Positions 431–452 are disordered; it reads AFRKDSTGSTSPKWSFRAMRRA.

This sequence belongs to the lyase 1 family. Argininosuccinate lyase subfamily.

It is found in the cytoplasm. The catalysed reaction is 2-(N(omega)-L-arginino)succinate = fumarate + L-arginine. It participates in amino-acid biosynthesis; L-arginine biosynthesis; L-arginine from L-ornithine and carbamoyl phosphate: step 3/3. This is Argininosuccinate lyase from Tremblaya princeps.